The sequence spans 94 residues: MSEQNSRPQNSERPQRSRRPQGGPRRRRKVDFIAANHIEYIDYKNTELLERFISERGKILPRRVTGTSAKNQRKVTTAIKRARIMALLPFVTED.

Low complexity predominate over residues 1–12; that stretch reads MSEQNSRPQNSE. The tract at residues 1 to 29 is disordered; sequence MSEQNSRPQNSERPQRSRRPQGGPRRRRK. The span at 16-29 shows a compositional bias: basic residues; sequence RSRRPQGGPRRRRK.

Belongs to the bacterial ribosomal protein bS18 family. Part of the 30S ribosomal subunit. Forms a tight heterodimer with protein bS6.

Its function is as follows. Binds as a heterodimer with protein bS6 to the central domain of the 16S rRNA, where it helps stabilize the platform of the 30S subunit. This chain is Small ribosomal subunit protein bS18, found in Leuconostoc mesenteroides subsp. mesenteroides (strain ATCC 8293 / DSM 20343 / BCRC 11652 / CCM 1803 / JCM 6124 / NCDO 523 / NBRC 100496 / NCIMB 8023 / NCTC 12954 / NRRL B-1118 / 37Y).